We begin with the raw amino-acid sequence, 242 residues long: Demethylmenaquinone methyltransferase (242 aa).

Residues T62, D83, and 112-113 contribute to the S-adenosyl-L-methionine site; that span reads DV.

Belongs to the class I-like SAM-binding methyltransferase superfamily. MenG/UbiE family.

It catalyses the reaction a 2-demethylmenaquinol + S-adenosyl-L-methionine = a menaquinol + S-adenosyl-L-homocysteine + H(+). It functions in the pathway quinol/quinone metabolism; menaquinone biosynthesis; menaquinol from 1,4-dihydroxy-2-naphthoate: step 2/2. Functionally, methyltransferase required for the conversion of demethylmenaquinol (DMKH2) to menaquinol (MKH2). This is Demethylmenaquinone methyltransferase from Protochlamydia amoebophila (strain UWE25).